The primary structure comprises 419 residues: MTTQLEQAWELAKQRFAAVGIDVEEALRQLDRLPVSMHCWQGDDVAGFENPEGSLTGGIQATGNYPGKARSASELRADLEQALSLIPGPKRLNLHAIYLESDTPVSRDQIKPEHFKNWVEWAKANQLGLDFNPSCFSHPLSADGFTLAHADDNIRQFWIDHCKASRRVSAYFGEQLGTPSVMNIWVPDGMKDITVDRLAPRQRLLEALDEVISEKLNPAHHIDAVESKLFGIGAESYTVGSNEFYMGYATSRQTALCLDAGHFHPTEVISDKISAAMLYVPRLLLHVSRPVRWDSDHVVLLDDETQAIASEIVRHNLFDRVHIGLDFFDASINRIAAWVIGTRNMKKALLRALLEPTGQLRQLEASGDYTARLALLEEQKSLPWQAVWEMYCQRHDTPAGSQWLESVRAYEKEILSKRS.

Mn(2+) contacts are provided by His262, Asp294, and Asp296.

This sequence belongs to the rhamnose isomerase family. In terms of assembly, homotetramer. The cofactor is Mn(2+).

The protein localises to the cytoplasm. The enzyme catalyses L-rhamnopyranose = L-rhamnulose. Its pathway is carbohydrate degradation; L-rhamnose degradation; glycerone phosphate from L-rhamnose: step 1/3. Functionally, catalyzes the interconversion of L-rhamnose and L-rhamnulose. This Citrobacter koseri (strain ATCC BAA-895 / CDC 4225-83 / SGSC4696) protein is L-rhamnose isomerase.